Consider the following 153-residue polypeptide: General odorant-binding protein lush (153 aa).

The signal sequence occupies residues 1–29; sequence MKHWKRRSSAVFAIVLQVLVLLLPDPAVA. Intrachain disulfides connect Cys46-Cys79, Cys75-Cys132, and Cys121-Cys141. 1-propanol is bound by residues Ser81 and Thr86. Positions 81 and 86 each coordinate butan-1-ol. 2 residues coordinate ethanol: Ser81 and Thr86.

The protein belongs to the PBP/GOBP family. As to expression, specifically expressed in chemosensory system in both males and females. Expressed in a subset of trichoid chemosensory sensilla located on the ventral-lateral surface of the third antennal segment. Secreted from non-neuronal support cells into the sensillum lymph that bathes the olfactory neurons within these sensilla.

Its subcellular location is the secreted. Its function is as follows. Odorant-binding protein required for olfactory behavior and for activity of pheromone-sensitive neurons. Binds to alcohols and mediates avoidance behavior to high concentrations of alcohols, the alcohol-binding possibly resulting in activation of receptors on T2B neurons, the activation of these receptors inhibiting these neurons. Acts in concert with Snmp and lush to capture cVA molecules on the surface of Or67d expressing olfactory dendrites and facilitate their transfer to the odorant-receptor Orco complex. Required for cVA response, probably by binding to VA. May act by serving as an adapter that bridges the presence of gaseous pheromone molecules, cVA, to activation of specific neuronal receptors expressed on T1 olfactory neurons, possibly via a specific conformational change induced by cVA that in turn activates T1 receptors. T1 neurons are excited by the pheromone VA, while T2 neurons are inhibited by alcohols. Also binds to phthalates. The sequence is that of General odorant-binding protein lush (lush) from Drosophila melanogaster (Fruit fly).